A 378-amino-acid chain; its full sequence is Erythronate-4-phosphate dehydrogenase (378 aa).

Positions 45 and 66 each coordinate substrate. 2 residues coordinate NAD(+): D146 and T175. Residue R208 is part of the active site. Residue D232 coordinates NAD(+). E237 is an active-site residue. H254 functions as the Proton donor in the catalytic mechanism. G257 provides a ligand contact to NAD(+). Y258 is a substrate binding site.

It belongs to the D-isomer specific 2-hydroxyacid dehydrogenase family. PdxB subfamily. In terms of assembly, homodimer.

It is found in the cytoplasm. The catalysed reaction is 4-phospho-D-erythronate + NAD(+) = (R)-3-hydroxy-2-oxo-4-phosphooxybutanoate + NADH + H(+). It participates in cofactor biosynthesis; pyridoxine 5'-phosphate biosynthesis; pyridoxine 5'-phosphate from D-erythrose 4-phosphate: step 2/5. Its function is as follows. Catalyzes the oxidation of erythronate-4-phosphate to 3-hydroxy-2-oxo-4-phosphonooxybutanoate. This chain is Erythronate-4-phosphate dehydrogenase, found in Escherichia fergusonii (strain ATCC 35469 / DSM 13698 / CCUG 18766 / IAM 14443 / JCM 21226 / LMG 7866 / NBRC 102419 / NCTC 12128 / CDC 0568-73).